Reading from the N-terminus, the 217-residue chain is Uracil-DNA glycosylase (217 aa).

D62 acts as the Proton acceptor in catalysis.

The protein belongs to the uracil-DNA glycosylase (UDG) superfamily. UNG family.

The protein localises to the cytoplasm. It catalyses the reaction Hydrolyzes single-stranded DNA or mismatched double-stranded DNA and polynucleotides, releasing free uracil.. In terms of biological role, excises uracil residues from the DNA which can arise as a result of misincorporation of dUMP residues by DNA polymerase or due to deamination of cytosine. The chain is Uracil-DNA glycosylase from Streptococcus equi subsp. zooepidemicus (strain MGCS10565).